The chain runs to 66 residues: Large ribosomal subunit protein bL35 (66 aa).

The protein belongs to the bacterial ribosomal protein bL35 family.

The chain is Large ribosomal subunit protein bL35 from Acholeplasma laidlawii (strain PG-8A).